The sequence spans 1218 residues: Chitin synthase 4 (1218 aa).

2 disordered regions span residues 1 to 93 and 132 to 190; these read MAEP…PERN and TVSS…RRQK. The span at 14-34 shows a compositional bias: basic and acidic residues; sequence TRDKSHSPYRESPSRRLRDVE. Asn-50 carries an N-linked (GlcNAc...) asparagine glycan. Composition is skewed to polar residues over residues 71–80 and 133–142; these read SNPNPMSQSD and VSSGSTQQDT. Over residues 175–190 the composition is skewed to basic and acidic residues; it reads RKDTRNLTEEEKRRQK. Asn-180 is a glycosylation site (N-linked (GlcNAc...) asparagine). 2 helical membrane passes run 200–220 and 235–255; these read IWNIYCAVVTFWAPDCLLQCF and VGLISIILLIAAFVGFLTFGF. N-linked (GlcNAc...) asparagine glycans are attached at residues Asn-365, Asn-404, and Asn-426. Residues 487–507 form a helical membrane-spanning segment; sequence VVLYVSLVFILAIVAAKFFLA. Disordered stretches follow at residues 548–570 and 582–606; these read PKITDPASTVTGSDGRTSKRGSM and YAVDRRSSRPPPTTMTSQSSNAKLL. Positions 553 to 562 are enriched in polar residues; that stretch reads PASTVTGSDG. 3 N-linked (GlcNAc...) asparagine glycosylation sites follow: Asn-617, Asn-903, and Asn-1030. Transmembrane regions (helical) follow at residues 1062–1082, 1087–1107, and 1115–1135; these read IGTLVLPAAISFTFYLIIISI, VPVIPLVLLALILGLPAILIV, and YILWMGIYLLSLPIWNFVLPA. The interval 1188-1218 is disordered; the sequence is QANGSVWNQQPPTRPPSGYGSMHGFEPYRDY. Positions 1189–1198 are enriched in polar residues; the sequence is ANGSVWNQQP. Asn-1190 carries an N-linked (GlcNAc...) asparagine glycan.

The protein belongs to the chitin synthase family. Class IV subfamily. In terms of processing, maximal activity requires trypsin activation, suggesting a zymogenic nature.

Its subcellular location is the cell membrane. The enzyme catalyses [(1-&gt;4)-N-acetyl-beta-D-glucosaminyl](n) + UDP-N-acetyl-alpha-D-glucosamine = [(1-&gt;4)-N-acetyl-beta-D-glucosaminyl](n+1) + UDP + H(+). Its activity is regulated as follows. Activity is stimulated by Mg(2+), and is more inhibited by polyoxin D than by nikkomycin. Its function is as follows. Polymerizes chitin, a structural polymer of the cell wall and septum, by transferring the sugar moiety of UDP-GlcNAc to the non-reducing end of the growing chitin polymer. CHS4 synthesizes a large amount of chitin and appears to play a role in the process of cell separation. CHS4 is particularly well suited for functioning at the higher temperatures associated with its poorly characterized saprophic environment and with human infection. The protein is Chitin synthase 4 of Exophiala dermatitidis (strain ATCC 34100 / CBS 525.76 / NIH/UT8656) (Black yeast).